A 163-amino-acid polypeptide reads, in one-letter code: 3-hydroxyacyl-[acyl-carrier-protein] dehydratase FabZ (163 aa).

Residue H58 is part of the active site.

It belongs to the thioester dehydratase family. FabZ subfamily.

It localises to the cytoplasm. It carries out the reaction a (3R)-hydroxyacyl-[ACP] = a (2E)-enoyl-[ACP] + H2O. In terms of biological role, involved in unsaturated fatty acids biosynthesis. Catalyzes the dehydration of short chain beta-hydroxyacyl-ACPs and long chain saturated and unsaturated beta-hydroxyacyl-ACPs. This is 3-hydroxyacyl-[acyl-carrier-protein] dehydratase FabZ from Francisella tularensis subsp. tularensis (strain FSC 198).